The chain runs to 60 residues: Large ribosomal subunit protein bL32 (60 aa).

The protein belongs to the bacterial ribosomal protein bL32 family.

The sequence is that of Large ribosomal subunit protein bL32 from Streptococcus mutans serotype c (strain ATCC 700610 / UA159).